A 96-amino-acid chain; its full sequence is Antitoxin ParD4 (96 aa).

This sequence belongs to the ParD antitoxin family.

Functionally, antitoxin component of a type II toxin-antitoxin (TA) system. Neutralizes the effect of cognate toxin ParE4, but no other RelE or ParE toxin. This is Antitoxin ParD4 (parD4) from Caulobacter vibrioides (strain ATCC 19089 / CIP 103742 / CB 15) (Caulobacter crescentus).